The primary structure comprises 206 residues: Pyridoxine/pyridoxamine 5'-phosphate oxidase (206 aa).

FMN-binding positions include Arg53–Lys58, Tyr68–Thr69, Lys75, and Gln97. Lys58 is a substrate binding site. Substrate-binding residues include Tyr115, Arg119, and Ser123. Residues Gln132–Ser133 and Trp177 each bind FMN. Arg183–His185 lines the substrate pocket. Residue Arg187 coordinates FMN.

The protein belongs to the pyridoxamine 5'-phosphate oxidase family. In terms of assembly, homodimer. FMN is required as a cofactor.

It carries out the reaction pyridoxamine 5'-phosphate + O2 + H2O = pyridoxal 5'-phosphate + H2O2 + NH4(+). The catalysed reaction is pyridoxine 5'-phosphate + O2 = pyridoxal 5'-phosphate + H2O2. It functions in the pathway cofactor metabolism; pyridoxal 5'-phosphate salvage; pyridoxal 5'-phosphate from pyridoxamine 5'-phosphate: step 1/1. The protein operates within cofactor metabolism; pyridoxal 5'-phosphate salvage; pyridoxal 5'-phosphate from pyridoxine 5'-phosphate: step 1/1. In terms of biological role, catalyzes the oxidation of either pyridoxine 5'-phosphate (PNP) or pyridoxamine 5'-phosphate (PMP) into pyridoxal 5'-phosphate (PLP). The polypeptide is Pyridoxine/pyridoxamine 5'-phosphate oxidase (Agrobacterium fabrum (strain C58 / ATCC 33970) (Agrobacterium tumefaciens (strain C58))).